The primary structure comprises 152 residues: MPKRVQVVLNEDVLSLGKDGDLVEVAPGYARNFLLPFGKAVPVTPAVMKQVEHRRAKEAERQAALKQAALDFRTALDTIGRFTVKKQTGEDNVLFGTVTNGDVAEAIQDATKKEIDRRDIVVPEIHRTGKYSVTVKLHSEVTAEINLEVVSY.

It belongs to the bacterial ribosomal protein bL9 family.

In terms of biological role, binds to the 23S rRNA. This chain is Large ribosomal subunit protein bL9, found in Parasynechococcus marenigrum (strain WH8102).